The sequence spans 89 residues: Small ribosomal subunit protein uS15 (89 aa).

It belongs to the universal ribosomal protein uS15 family. As to quaternary structure, part of the 30S ribosomal subunit. Forms a bridge to the 50S subunit in the 70S ribosome, contacting the 23S rRNA.

In terms of biological role, one of the primary rRNA binding proteins, it binds directly to 16S rRNA where it helps nucleate assembly of the platform of the 30S subunit by binding and bridging several RNA helices of the 16S rRNA. Functionally, forms an intersubunit bridge (bridge B4) with the 23S rRNA of the 50S subunit in the ribosome. In Bordetella avium (strain 197N), this protein is Small ribosomal subunit protein uS15.